The sequence spans 43 residues: Antimicrobial protein PcfHb (43 aa).

As to quaternary structure, possible monomer. In terms of tissue distribution, expressed in mucus-secreting tissues.

It is found in the secreted. In terms of biological role, shows antimicrobial activity against M.luteus (MIC=4 uM) and E.coli (MIC=12 uM), as well as against the yeast C.tropicalis (MIC=4 uM). Shows a pro-inflammatory effect, since the topical application of the protein induces an increase of cellular recruitment characterized by an increase in the number of leukocyte rolling. Does not show hemolytic activity on human erythrocytes (at doses up to 100 uM). This chain is Antimicrobial protein PcfHb, found in Potamotrygon cf. henlei (Freshwater stingray).